A 433-amino-acid chain; its full sequence is D-amino acid dehydrogenase (433 aa).

3–17 (VLVLGSGVIGTASAY) contributes to the FAD binding site.

It belongs to the DadA oxidoreductase family. Requires FAD as cofactor.

The catalysed reaction is a D-alpha-amino acid + A + H2O = a 2-oxocarboxylate + AH2 + NH4(+). It functions in the pathway amino-acid degradation; D-alanine degradation; NH(3) and pyruvate from D-alanine: step 1/1. Oxidative deamination of D-amino acids. This chain is D-amino acid dehydrogenase, found in Pseudomonas putida (strain W619).